The primary structure comprises 341 residues: Ferredoxin--NADP reductase (341 aa).

FAD is bound by residues D38, Q46, Y51, V91, F125, D292, and T333.

This sequence belongs to the ferredoxin--NADP reductase type 2 family. As to quaternary structure, homodimer. Requires FAD as cofactor.

The enzyme catalyses 2 reduced [2Fe-2S]-[ferredoxin] + NADP(+) + H(+) = 2 oxidized [2Fe-2S]-[ferredoxin] + NADPH. This chain is Ferredoxin--NADP reductase, found in Gluconacetobacter diazotrophicus (strain ATCC 49037 / DSM 5601 / CCUG 37298 / CIP 103539 / LMG 7603 / PAl5).